The chain runs to 98 residues: Large ribosomal subunit protein eL21 (98 aa).

Over residues 1–24 (MVKKAHSFRRKTRGKLSKHPRRRG) the composition is skewed to basic residues. The segment at 1–27 (MVKKAHSFRRKTRGKLSKHPRRRGLPP) is disordered.

It belongs to the eukaryotic ribosomal protein eL21 family.

This chain is Large ribosomal subunit protein eL21, found in Thermococcus gammatolerans (strain DSM 15229 / JCM 11827 / EJ3).